Here is a 173-residue protein sequence, read N- to C-terminus: Alpha-crystallin A chain (173 aa).

Methionine 1 is modified (N-acetylmethionine). A required for complex formation with BFSP1 and BFSP2 region spans residues 1-63; that stretch reads MDVTIQHPWF…RTVLDSGISE (63 aa). A Deamidated glutamine; partial modification is found at glutamine 6. A Phosphoserine modification is found at serine 45. Glutamine 50 and glutamine 90 each carry deamidated glutamine; partial. In terms of domain architecture, sHSP spans 52–162; sequence LFRTVLDSGI…SHSERAIPVS (111 aa). Lysine 99 carries the post-translational modification N6-acetyllysine. Histidine 100 contacts Zn(2+). Asparagine 101 is subject to Deamidated asparagine; partial. Zn(2+) contacts are provided by glutamate 102 and histidine 107. Phosphoserine is present on serine 122. Deamidated asparagine; partial is present on asparagine 123. The cysteines at positions 131 and 142 are disulfide-linked. Glutamine 147 carries the post-translational modification Deamidated glutamine; partial. The tract at residues 149–173 is disordered; the sequence is GMDASHSERAIPVSREEKPSSAPSS. The segment covering 153–167 has biased composition (basic and acidic residues); it reads SHSERAIPVSREEKP. A Zn(2+)-binding site is contributed by histidine 154. O-linked (GlcNAc) serine glycosylation occurs at serine 162.

The protein belongs to the small heat shock protein (HSP20) family. As to quaternary structure, heteromer composed of three CRYAA and one CRYAB subunits. Inter-subunit bridging via zinc ions enhances stability, which is crucial as there is no protein turn over in the lens. Can also form homodimers and homotetramers (dimers of dimers) which serve as the building blocks of homooligomers. Within homooligomers, the zinc-binding motif is created from residues of 3 different molecules. His-100 and Glu-102 from one molecule are ligands of the zinc ion, and His-107 and His-154 residues from additional molecules complete the site with tetrahedral coordination geometry. Part of a complex required for lens intermediate filament formation composed of BFSP1, BFSP2 and CRYAA. Post-translationally, undergoes age-dependent proteolytical cleavage at the C-terminus.

The protein localises to the cytoplasm. It is found in the nucleus. Contributes to the transparency and refractive index of the lens. In its oxidized form (absence of intramolecular disulfide bond), acts as a chaperone, preventing aggregation of various proteins under a wide range of stress conditions. Required for the correct formation of lens intermediate filaments as part of a complex composed of BFSP1, BFSP2 and CRYAA. The protein is Alpha-crystallin A chain (CRYAA) of Loxodonta africana (African elephant).